A 664-amino-acid polypeptide reads, in one-letter code: L-glutamate oxidase precursor (664 aa).

Residues 1-44 (MTEDHAVVRSDGGLSRRSFAAVAGTATVATALTSGVAAALPAPA) constitute a signal peptide (tat-type signal). Ala-105, Glu-124, Ala-125, Arg-133, Met-161, Arg-162, Asp-638, Trp-646, and Ile-647 together coordinate FAD.

Belongs to the flavin monoamine oxidase family. LGOX subfamily. In terms of assembly, the mature enzyme is a heterohexamer composed of 2 alpha chains, 2 beta chains and 2 gamma chains (alpha2beta2gamma2). Requires FAD as cofactor. In terms of processing, predicted to be exported by the Tat system. The position of the signal peptide cleavage has not been experimentally proven. The precursor form is proteolytically cleaved by an endopeptidase into alpha, beta and gamma chains, which form the stable mature enzyme.

The protein resides in the secreted. It carries out the reaction L-glutamate + O2 + H2O = H2O2 + 2-oxoglutarate + NH4(+). Activity is stimulated in the presence of Mn(2+), Ca(2+) or Mg(2+). Its function is as follows. Catalyzes the oxidative deamination of L-glutamate to 2-ketoglutarate along with the production of ammonia and hydrogen peroxide. The polypeptide is L-glutamate oxidase precursor (Streptomyces viridosporus (strain ATCC 14672 / DSM 40746 / JCM 4963 / KCTC 9882 / NRRL B-12104 / FH 1290) (Streptomyces ghanaensis)).